The chain runs to 239 residues: MLTRKQHELLLFIHERLKETGIPPSFDEMKEALDLASKSGIHRLITALEERGFIRRLPNRARALEVLRLPDSIAPGLNAQKKFAPSVIEGSLGKTPPPPARPAPVATNDDTSGTVSVPVMGRIAAGVPISAIQNQTHSLSLPPEMIGAGEHYALEVRGDSMIDAGIFDGDTVIIKRGDSANPGEIVVALVDDEEATLKRFRRKGASIALEAANPAYETRIFGPDRVRVQGKLVGLIRRY.

A DNA-binding region (H-T-H motif) is located at residues 26–46 (FDEMKEALDLASKSGIHRLIT). Positions 90–110 (GSLGKTPPPPARPAPVATNDD) are disordered. Active-site for autocatalytic cleavage activity residues include serine 160 and lysine 198.

This sequence belongs to the peptidase S24 family. In terms of assembly, homodimer.

It catalyses the reaction Hydrolysis of Ala-|-Gly bond in repressor LexA.. In terms of biological role, represses a number of genes involved in the response to DNA damage (SOS response), including recA and lexA. In the presence of single-stranded DNA, RecA interacts with LexA causing an autocatalytic cleavage which disrupts the DNA-binding part of LexA, leading to derepression of the SOS regulon and eventually DNA repair. The protein is LexA repressor of Brucella anthropi (strain ATCC 49188 / DSM 6882 / CCUG 24695 / JCM 21032 / LMG 3331 / NBRC 15819 / NCTC 12168 / Alc 37) (Ochrobactrum anthropi).